We begin with the raw amino-acid sequence, 64 residues long: Beta sliding clamp (64 aa).

The protein belongs to the beta sliding clamp family. Forms a ring-shaped head-to-tail homodimer around DNA which binds and tethers DNA polymerases and other proteins to the DNA. The DNA replisome complex has a single clamp-loading complex (3 tau and 1 each of delta, delta', psi and chi subunits) which binds 3 Pol III cores (1 core on the leading strand and 2 on the lagging strand) each with a beta sliding clamp dimer. Additional proteins in the replisome are other copies of gamma, psi and chi, Ssb, DNA helicase and RNA primase.

The protein localises to the cytoplasm. Confers DNA tethering and processivity to DNA polymerases and other proteins. Acts as a clamp, forming a ring around DNA (a reaction catalyzed by the clamp-loading complex) which diffuses in an ATP-independent manner freely and bidirectionally along dsDNA. Initially characterized for its ability to contact the catalytic subunit of DNA polymerase III (Pol III), a complex, multichain enzyme responsible for most of the replicative synthesis in bacteria; Pol III exhibits 3'-5' exonuclease proofreading activity. The beta chain is required for initiation of replication as well as for processivity of DNA replication. The chain is Beta sliding clamp (dnaN) from Actinobacillus pleuropneumoniae (Haemophilus pleuropneumoniae).